The following is a 286-amino-acid chain: Ribosomal RNA small subunit methyltransferase A (286 aa).

Residues His11, Leu13, Gly44, Glu65, Asp90, and Asn115 each coordinate S-adenosyl-L-methionine.

This sequence belongs to the class I-like SAM-binding methyltransferase superfamily. rRNA adenine N(6)-methyltransferase family. RsmA subfamily.

It localises to the cytoplasm. It catalyses the reaction adenosine(1518)/adenosine(1519) in 16S rRNA + 4 S-adenosyl-L-methionine = N(6)-dimethyladenosine(1518)/N(6)-dimethyladenosine(1519) in 16S rRNA + 4 S-adenosyl-L-homocysteine + 4 H(+). In terms of biological role, specifically dimethylates two adjacent adenosines (A1518 and A1519) in the loop of a conserved hairpin near the 3'-end of 16S rRNA in the 30S particle. May play a critical role in biogenesis of 30S subunits. This chain is Ribosomal RNA small subunit methyltransferase A, found in Nostoc punctiforme (strain ATCC 29133 / PCC 73102).